The chain runs to 429 residues: Glucose-1-phosphate adenylyltransferase (429 aa).

Alpha-D-glucose 1-phosphate is bound by residues Gly162, 177-178 (EK), and Ser209.

It belongs to the bacterial/plant glucose-1-phosphate adenylyltransferase family. Homotetramer.

It catalyses the reaction alpha-D-glucose 1-phosphate + ATP + H(+) = ADP-alpha-D-glucose + diphosphate. The protein operates within glycan biosynthesis; glycogen biosynthesis. In terms of biological role, involved in the biosynthesis of ADP-glucose, a building block required for the elongation reactions to produce glycogen. Catalyzes the reaction between ATP and alpha-D-glucose 1-phosphate (G1P) to produce pyrophosphate and ADP-Glc. This chain is Glucose-1-phosphate adenylyltransferase, found in Picosynechococcus sp. (strain ATCC 27264 / PCC 7002 / PR-6) (Agmenellum quadruplicatum).